The following is a 308-amino-acid chain: Ornithine carbamoyltransferase (308 aa).

Carbamoyl phosphate contacts are provided by residues 56–59 (STRT), Gln83, Arg107, and 134–137 (HPCQ). Residues Asn165, Asp225, and 229–230 (SM) each bind L-ornithine. Residues 266-267 (CL) and Arg294 each bind carbamoyl phosphate.

Belongs to the aspartate/ornithine carbamoyltransferase superfamily. OTCase family.

Its subcellular location is the cytoplasm. It carries out the reaction carbamoyl phosphate + L-ornithine = L-citrulline + phosphate + H(+). Its pathway is amino-acid degradation; L-arginine degradation via ADI pathway; carbamoyl phosphate from L-arginine: step 2/2. In terms of biological role, reversibly catalyzes the transfer of the carbamoyl group from carbamoyl phosphate (CP) to the N(epsilon) atom of ornithine (ORN) to produce L-citrulline. In Cereibacter sphaeroides (strain KD131 / KCTC 12085) (Rhodobacter sphaeroides), this protein is Ornithine carbamoyltransferase.